A 249-amino-acid polypeptide reads, in one-letter code: Structural protein VP10 (249 aa).

The protein resides in the virion. Forms the virion spike 'foot' and helps anchor the VP9 spike 'head' protein in the virion. The sequence is that of Structural protein VP10 (Segment-10) from Banna virus (BAV).